The primary structure comprises 280 residues: Alpha-aminoadipate--LysW ligase LysX (280 aa).

ATP contacts are provided by residues Lys-89, Lys-129, 133-139 (GSWGRLL), 169-180 (QEYVEKPGRDIR), Arg-194, and Asn-202. Residues 93–276 (SVALAKAGLP…IPGEILKYAW (184 aa)) form the ATP-grasp domain. Mg(2+)-binding residues include Asp-237, Glu-249, and Asn-251. Residues 258–259 (NS) carry the N-[TS] motif that is essential for LysX substrate specificity motif.

This sequence belongs to the RimK family. LysX subfamily. As to quaternary structure, homodimer. The cofactor is Mg(2+).

It catalyses the reaction [amino-group carrier protein]-C-terminal-L-glutamate + L-2-aminoadipate + ATP = [amino-group carrier protein]-C-terminal-N-(1,4-dicarboxybutan-1-yl)-L-glutamine + ADP + phosphate + H(+). It functions in the pathway amino-acid biosynthesis; L-lysine biosynthesis via AAA pathway; L-lysine from L-alpha-aminoadipate (Thermus route): step 1/5. Catalyzes the ATP-dependent formation of a covalent bond between the amino group of alpha-aminoadipate (AAA) and the gamma-carboxyl group of the C-terminal glutamate residue in LysW. The sequence is that of Alpha-aminoadipate--LysW ligase LysX (lysX) from Thermus thermophilus (strain ATCC 27634 / DSM 579 / HB8).